Here is an 863-residue protein sequence, read N- to C-terminus: ATP-dependent helicase Lhr-Core protein 2 (863 aa).

F30, Q37, K60, T61, D179, E180, R377, and H380 together coordinate ATP. In terms of domain architecture, Helicase ATP-binding spans 41-234 (VIEIHKGENV…FVFGFNDDGT (194 aa)). The DEAH box motif lies at 179-182 (DEVH). The Helicase C-terminal domain maps to 275–424 (RLDELIEQHR…RIKIPQNPLD (150 aa)). Residues 418–512 (IPQNPLDVLV…AIYYMNTGTI (95 aa)) are WH domain. The tract at residues 513-863 (PDEAKIEVYT…KIMAMIGELE (351 aa)) is domain 4.

This sequence belongs to the Lhr helicase family. Lhr-Core subfamily. As to quaternary structure, monomer.

It catalyses the reaction ATP + H2O = ADP + phosphate + H(+). Its activity is regulated as follows. Unwinding of dsRNA duplexes is inhibited by AMP-PMP and ATP-gamma-S. Functionally, a DNA:RNA helicase with a significant strand annealing activity, probably involved in DNA repair and RNA transactions. In vitro has a slow helicase activity with a preference for 3'-overhang duplexes; displaces RNA from 3'-overhang DNA:RNA or RNA:RNA duplexes. 3'-tailed double-stranded (ds)DNA is not unwound. The slow helicase activity on RNA duplexes is ATP-independent. Has strand annealing properties in the absence of ATP; forms 3'-overhang DNA:RNA, 3'-overhang dsRNA and 3'-overhang dsDNA duplexes but not 5'-overhang duplexes. A nucleic acid-dependent ATPase; single-stranded (ss)DNA and RNA are equally stimulatory. Binds ssDNA, RNA, dsDNA and dsRNA duplexes. In Thermococcus barophilus (strain DSM 11836 / MP), this protein is ATP-dependent helicase Lhr-Core protein 2.